The following is a 232-amino-acid chain: Enolase-phosphatase E1 (232 aa).

It belongs to the HAD-like hydrolase superfamily. MasA/MtnC family. Monomer. The cofactor is Mg(2+).

The enzyme catalyses 5-methylsulfanyl-2,3-dioxopentyl phosphate + H2O = 1,2-dihydroxy-5-(methylsulfanyl)pent-1-en-3-one + phosphate. It functions in the pathway amino-acid biosynthesis; L-methionine biosynthesis via salvage pathway; L-methionine from S-methyl-5-thio-alpha-D-ribose 1-phosphate: step 3/6. It participates in amino-acid biosynthesis; L-methionine biosynthesis via salvage pathway; L-methionine from S-methyl-5-thio-alpha-D-ribose 1-phosphate: step 4/6. In terms of biological role, bifunctional enzyme that catalyzes the enolization of 2,3-diketo-5-methylthiopentyl-1-phosphate (DK-MTP-1-P) into the intermediate 2-hydroxy-3-keto-5-methylthiopentenyl-1-phosphate (HK-MTPenyl-1-P), which is then dephosphorylated to form the acireductone 1,2-dihydroxy-3-keto-5-methylthiopentene (DHK-MTPene). The polypeptide is Enolase-phosphatase E1 (Xanthomonas oryzae pv. oryzae (strain KACC10331 / KXO85)).